Consider the following 50-residue polypeptide: Cytochrome c oxidase subunit 4 (50 aa).

Residues 2 to 17 are Cytoplasmic-facing; that stretch reads ASHHEITDHKHGEMDI. Residues 18–49 traverse the membrane as a helical segment; sequence RHQQATFAGFIKGATWVSILSIAVLVFLALAN. Ser-50 is a topological domain (periplasmic).

The protein localises to the cell inner membrane. It catalyses the reaction 4 Fe(II)-[cytochrome c] + O2 + 8 H(+)(in) = 4 Fe(III)-[cytochrome c] + 2 H2O + 4 H(+)(out). Its function is as follows. Not required for enzymatic activity or proton pumping of the cytochrome c oxidase complex. In Paracoccus denitrificans, this protein is Cytochrome c oxidase subunit 4 (ctaH).